The following is a 479-amino-acid chain: Probable periplasmic serine endoprotease DegP-like (479 aa).

Residues 1-27 (MSIPRLKSYLSMFAAVLMLGQVLSAQA) form the signal peptide. Residues histidine 117, aspartate 147, and serine 220 each act as charge relay system in the active site. Residues 218 to 220 (GNS) and 275 to 279 (LGVVI) each bind substrate. 2 PDZ domains span residues 264-355 (LKKD…IRNG) and 361-468 (DVTI…LRQG). A disordered region spans residues 368 to 395 (PDDDADIGTGTGADGSAERSSNRLGVSV).

It belongs to the peptidase S1C family.

Its subcellular location is the periplasm. It carries out the reaction Acts on substrates that are at least partially unfolded. The cleavage site P1 residue is normally between a pair of hydrophobic residues, such as Val-|-Val.. Might be efficient in the degradation of transiently denatured and unfolded proteins which accumulate in the periplasm following stress conditions. This Pseudomonas putida (strain W619) protein is Probable periplasmic serine endoprotease DegP-like.